We begin with the raw amino-acid sequence, 122 residues long: Large ribosomal subunit protein uL14 (122 aa).

The protein belongs to the universal ribosomal protein uL14 family. Part of the 50S ribosomal subunit. Forms a cluster with proteins L3 and L19. In the 70S ribosome, L14 and L19 interact and together make contacts with the 16S rRNA in bridges B5 and B8.

Functionally, binds to 23S rRNA. Forms part of two intersubunit bridges in the 70S ribosome. The chain is Large ribosomal subunit protein uL14 from Delftia acidovorans (strain DSM 14801 / SPH-1).